We begin with the raw amino-acid sequence, 285 residues long: UPF0354 protein SA1564 (285 aa).

The protein belongs to the UPF0354 family.

The chain is UPF0354 protein SA1564 from Staphylococcus aureus (strain N315).